The sequence spans 351 residues: MRFKTVDLPYHVYIGENVISKLPKVLRSLDANYFLLLTDEVVKNLVVVNLKETLKDFEYDMMLVESAKMEEARKIVLRGGFADYDAVVGVGGGKVLDVSKVVSSELNASMISVPTTASHDGIASPVASFKENGKPISISTNPPSAVIADLNIIKNCPIRLLRSGYGDLVSNISSVKDWQLARDLVGEDYNEVAASIAVMPAQLMVSKADELDLTLPPHLLMLLRGLIMSGVAIAFVGSSRPASGAEHKFSHALDYLGYGNGTHGEQVALGTIIMEYLHEKYYGRGDWEQIKMSLEKVHAPTTAKEIGLTREQVIEALMLATKLRKKRFTILEAVKPTKEEFELVVEKTGVA.

NAD(+) is bound by residues Gly93–Asp97 and Thr115–Ser118. Residue Asp120 participates in substrate binding. Residue Ser124 participates in NAD(+) binding. Asp167 serves as a coordination point for substrate. Zn(2+)-binding residues include Asp167 and His247. Residue His251 participates in substrate binding. His263 is a Zn(2+) binding site.

It belongs to the glycerol-1-phosphate dehydrogenase family. Requires Zn(2+) as cofactor.

It is found in the cytoplasm. The catalysed reaction is sn-glycerol 1-phosphate + NAD(+) = dihydroxyacetone phosphate + NADH + H(+). It catalyses the reaction sn-glycerol 1-phosphate + NADP(+) = dihydroxyacetone phosphate + NADPH + H(+). It participates in membrane lipid metabolism; glycerophospholipid metabolism. Functionally, catalyzes the NAD(P)H-dependent reduction of dihydroxyacetonephosphate (DHAP or glycerone phosphate) to glycerol 1-phosphate (G1P). The G1P thus generated is used as the glycerophosphate backbone of phospholipids in the cellular membranes of Archaea. The chain is Glycerol-1-phosphate dehydrogenase [NAD(P)+] from Archaeoglobus fulgidus (strain ATCC 49558 / DSM 4304 / JCM 9628 / NBRC 100126 / VC-16).